Consider the following 438-residue polypeptide: Cell division cycle-associated 7-like protein (438 aa).

Residues I9 to V33 carry the Integrase domain-binding motif 1 (IBM1) motif. At S21 the chain carries Phosphoserine. Positions A55–D114 are PSIP1-binding. The short motif at F62–E88 is the Integrase domain-binding motif 2 (IBM2) element. Positions E72–S199 are disordered. Position 74 is a phosphothreonine (T74). Acidic residues predominate over residues T74–T85. The residue at position 76 (S76) is a Phosphoserine. A Phosphothreonine modification is found at T85. A phosphoserine mark is found at S100, S103, S113, S135, S136, S183, and S185. Over residues S113–E123 the composition is skewed to acidic residues. A compositionally biased stretch (basic and acidic residues) spans T166 to S183. The MYC-binding stretch occupies residues A201–L223. Glycyl lysine isopeptide (Lys-Gly) (interchain with G-Cter in SUMO2) cross-links involve residues K210 and K213. The residue at position 249 (S249) is a Phosphoserine.

As to quaternary structure, interacts with MYC. Interacts (via IBM motifs) with PSIP1 (via IBD domain); phosphorylation increases its affinity for PSIP1. Phosphorylation increases its interaction with PSIP1.

It localises to the cytoplasm. It is found in the nucleus. Its function is as follows. Plays a role in transcriptional regulation as a repressor that inhibits monoamine oxidase A (MAOA) activity and gene expression by binding to the promoter. Plays an important oncogenic role in mediating the full transforming effect of MYC in medulloblastoma cells. Involved in apoptotic signaling pathways; May act downstream of P38-kinase and BCL-2, but upstream of CASP3/caspase-3 as well as CCND1/cyclin D1 and E2F1. This Rattus norvegicus (Rat) protein is Cell division cycle-associated 7-like protein (Cdca7l).